The primary structure comprises 362 residues: Phosphoserine aminotransferase (362 aa).

The L-glutamate site is built by Ser9 and Arg42. Pyridoxal 5'-phosphate is bound by residues 76–77, Trp102, Thr153, Asp174, and Gln197; that span reads GR. Lys198 carries the post-translational modification N6-(pyridoxal phosphate)lysine. Residue 239–240 coordinates pyridoxal 5'-phosphate; sequence NT.

The protein belongs to the class-V pyridoxal-phosphate-dependent aminotransferase family. SerC subfamily. Homodimer. The cofactor is pyridoxal 5'-phosphate.

It is found in the cytoplasm. The catalysed reaction is O-phospho-L-serine + 2-oxoglutarate = 3-phosphooxypyruvate + L-glutamate. The enzyme catalyses 4-(phosphooxy)-L-threonine + 2-oxoglutarate = (R)-3-hydroxy-2-oxo-4-phosphooxybutanoate + L-glutamate. It participates in amino-acid biosynthesis; L-serine biosynthesis; L-serine from 3-phospho-D-glycerate: step 2/3. It functions in the pathway cofactor biosynthesis; pyridoxine 5'-phosphate biosynthesis; pyridoxine 5'-phosphate from D-erythrose 4-phosphate: step 3/5. Its function is as follows. Catalyzes the reversible conversion of 3-phosphohydroxypyruvate to phosphoserine and of 3-hydroxy-2-oxo-4-phosphonooxybutanoate to phosphohydroxythreonine. The protein is Phosphoserine aminotransferase of Escherichia coli O6:K15:H31 (strain 536 / UPEC).